A 94-amino-acid chain; its full sequence is Large ribosomal subunit protein uL23 (94 aa).

It belongs to the universal ribosomal protein uL23 family. Part of the 50S ribosomal subunit. Contacts protein L29, and trigger factor when it is bound to the ribosome.

Its function is as follows. One of the early assembly proteins it binds 23S rRNA. One of the proteins that surrounds the polypeptide exit tunnel on the outside of the ribosome. Forms the main docking site for trigger factor binding to the ribosome. The polypeptide is Large ribosomal subunit protein uL23 (Treponema denticola (strain ATCC 35405 / DSM 14222 / CIP 103919 / JCM 8153 / KCTC 15104)).